The following is a 350-amino-acid chain: Secreted effector protein PipB2 (350 aa).

Pentapeptide repeat domains lie at 162 to 201, 202 to 241, 247 to 286, and 287 to 326; these read ANLT…NLSG, TSLG…SLLG, CNCS…IMEG, and AVLT…TLTD.

Interacts with the host kinesin light chain (KLC), a subunit of the kinesin-1 motor complex.

It is found in the secreted. The protein localises to the host membrane. Functionally, effector proteins function to alter host cell physiology and promote bacterial survival in host tissues. Involved in the reorganization of late endosome/lysosome (LE/Lys) compartments in mammalian cells. Necessary and sufficient to link kinesin-1 onto the Salmonella-containing vacuole (SCV) membrane. Required for centrifugal extension of lysosomal glycoprotein-rich membrane tubules, known as Salmonella-induced filaments (Sifs), away from the SCV and toward the cell periphery. Required for virulence, but not for intracellular survival and replication in phagocytic cells. The protein is Secreted effector protein PipB2 (pipB2) of Salmonella typhimurium (strain LT2 / SGSC1412 / ATCC 700720).